We begin with the raw amino-acid sequence, 475 residues long: Methylenetetrahydrofolate--tRNA-(uracil-5-)-methyltransferase TrmFO (475 aa).

Position 9-14 (9-14) interacts with FAD; that stretch reads GGGLAG. A disordered region spans residues 427–447; the sequence is APRNETGRRLRGPEKAALKKR.

It belongs to the MnmG family. TrmFO subfamily. It depends on FAD as a cofactor.

Its subcellular location is the cytoplasm. It catalyses the reaction uridine(54) in tRNA + (6R)-5,10-methylene-5,6,7,8-tetrahydrofolate + NADH + H(+) = 5-methyluridine(54) in tRNA + (6S)-5,6,7,8-tetrahydrofolate + NAD(+). It carries out the reaction uridine(54) in tRNA + (6R)-5,10-methylene-5,6,7,8-tetrahydrofolate + NADPH + H(+) = 5-methyluridine(54) in tRNA + (6S)-5,6,7,8-tetrahydrofolate + NADP(+). Its function is as follows. Catalyzes the folate-dependent formation of 5-methyl-uridine at position 54 (M-5-U54) in all tRNAs. In Methylobacterium radiotolerans (strain ATCC 27329 / DSM 1819 / JCM 2831 / NBRC 15690 / NCIMB 10815 / 0-1), this protein is Methylenetetrahydrofolate--tRNA-(uracil-5-)-methyltransferase TrmFO.